Here is a 161-residue protein sequence, read N- to C-terminus: SsrA-binding protein (161 aa).

Residues 138–161 (DKRTDSKEKDWNRDKARIMKSSLR) form a disordered region. A compositionally biased stretch (basic and acidic residues) spans 139-154 (KRTDSKEKDWNRDKAR).

The protein belongs to the SmpB family.

Its subcellular location is the cytoplasm. In terms of biological role, required for rescue of stalled ribosomes mediated by trans-translation. Binds to transfer-messenger RNA (tmRNA), required for stable association of tmRNA with ribosomes. tmRNA and SmpB together mimic tRNA shape, replacing the anticodon stem-loop with SmpB. tmRNA is encoded by the ssrA gene; the 2 termini fold to resemble tRNA(Ala) and it encodes a 'tag peptide', a short internal open reading frame. During trans-translation Ala-aminoacylated tmRNA acts like a tRNA, entering the A-site of stalled ribosomes, displacing the stalled mRNA. The ribosome then switches to translate the ORF on the tmRNA; the nascent peptide is terminated with the 'tag peptide' encoded by the tmRNA and targeted for degradation. The ribosome is freed to recommence translation, which seems to be the essential function of trans-translation. The protein is SsrA-binding protein of Aliivibrio fischeri (strain MJ11) (Vibrio fischeri).